A 325-amino-acid polypeptide reads, in one-letter code: MSETATWQPSASIPNLLKRAAIMTEIRRFFADRGVLEVETPCMSQATVTDIHLFPFETRFVGPGHSQGMNLYLMTSPEYHMKRLLAAGCGPVFQLCRSFRNEEMGRHHNPEFTMLEWYRPHYDMYRLMNEVDDLLQQVLDCQPAESLSYQQAFQRHLEIDPLSADKTQLREAAAKLDLSNIADTEEDRDTLLQLLFTMGVEPHIGKEKPTFIYHFPASQASLAQISTEDHRVAERFEVYYKGIELANGFHELTDAREQQQRFEQDNRKRAARGLPQQPIDQNLLDALAAGLPDCSGVALGVDRLVMLALGAESLADVIAFTVDRA.

A substrate-binding site is contributed by 76-78 (SPE). ATP contacts are provided by residues 100–102 (RNE) and N109. Residue Y118 coordinates substrate. An ATP-binding site is contributed by 244-245 (EL). Substrate is bound at residue E251. Residue G300 coordinates ATP.

It belongs to the class-II aminoacyl-tRNA synthetase family. EpmA subfamily. As to quaternary structure, homodimer.

The catalysed reaction is D-beta-lysine + L-lysyl-[protein] + ATP = N(6)-((3R)-3,6-diaminohexanoyl)-L-lysyl-[protein] + AMP + diphosphate + H(+). Its function is as follows. With EpmB is involved in the beta-lysylation step of the post-translational modification of translation elongation factor P (EF-P) on 'Lys-34'. Catalyzes the ATP-dependent activation of (R)-beta-lysine produced by EpmB, forming a lysyl-adenylate, from which the beta-lysyl moiety is then transferred to the epsilon-amino group of EF-P 'Lys-34'. This is Elongation factor P--(R)-beta-lysine ligase from Salmonella paratyphi A (strain ATCC 9150 / SARB42).